The chain runs to 368 residues: Protein PXR1 (368 aa).

Residues 1-24 (MGLAGAKNKRKLGNDPNNTKWSRN) are disordered. Residues 15-24 (DPNNTKWSRN) show a composition bias toward polar residues. The 55-residue stretch at 25 to 79 (TDTFGQKILRAQGWQPGEYLGAKDAAHAEWHTEANTTHIRVTLKDDTLGLGAKRN) folds into the G-patch domain. The segment at 144 to 337 (TPDEEAEEIP…GYSTPIPTGS (194 aa)) is disordered. Residues 176-186 (RRSDKEDDKLG) show a composition bias toward basic and acidic residues. Composition is skewed to basic residues over residues 187–196 (KKEKKSKKRK) and 257–277 (DKKR…KKEK). Residues 310–337 (PSSAPTPTDSNSSTPTGSGYSTPIPTGS) show a composition bias toward low complexity.

Belongs to the PINX1 family.

The protein localises to the nucleus. Its subcellular location is the nucleolus. Functionally, involved in rRNA-processing at A0, A1 and A2 sites and negatively regulates telomerase. The sequence is that of Protein PXR1 (PXR1) from Chaetomium globosum (strain ATCC 6205 / CBS 148.51 / DSM 1962 / NBRC 6347 / NRRL 1970) (Soil fungus).